We begin with the raw amino-acid sequence, 267 residues long: Probable E3 ubiquitin-protein ligase dma1 (267 aa).

Residues 60 to 116 form the FHA domain; sequence IYIGRYTERYNGGDVSAIVFRSKVVSRRHAQIFYENNTWYIQDMGSSSGTFLNHVRL. The segment at 192 to 236 adopts an RING-type zinc-finger fold; it reads CCICLMPVLPCQALFVAPCSHSYHYKCIRPTLNESHPYFSCFICR.

The protein belongs to the DMA1 family. As to quaternary structure, interacts with sid4.

It localises to the cytoplasm. It is found in the cytoskeleton. The protein resides in the microtubule organizing center. Its subcellular location is the spindle pole body. It catalyses the reaction S-ubiquitinyl-[E2 ubiquitin-conjugating enzyme]-L-cysteine + [acceptor protein]-L-lysine = [E2 ubiquitin-conjugating enzyme]-L-cysteine + N(6)-ubiquitinyl-[acceptor protein]-L-lysine.. Probable E3 ubiquitin-protein ligase which is a component of the spindle assembly checkpoint, required to prevent septum formation and premature exit from mitosis if spindle function is compromised. Inhibits the septation initiation netwok (SIN) during spindle checkpoint activation. The effect appears to be mediated through preventing the SIN activator, plo1 kinase, from localizing to the SPB. This chain is Probable E3 ubiquitin-protein ligase dma1 (dma1), found in Schizosaccharomyces pombe (strain 972 / ATCC 24843) (Fission yeast).